The chain runs to 160 residues: MLGNKFVAQLALQQLKNRGLLTSAPRLTSVRHRFAWGSDAVGPNVPVGGKMGASENPELHTYDGDYRGTISKGDKPIPDYFYRTPTTGRTYIDRCVTYFISAVIWAWFSYHMYYHSGHLLGHWYMPYLTEFSDEELGIPKDSAEDPEYWGNHKKEYGTYR.

Belongs to the complex I NDUFB2 subunit family. As to quaternary structure, complex I is composed of 45 different subunits.

It localises to the mitochondrion inner membrane. Functionally, accessory subunit of the mitochondrial membrane respiratory chain NADH dehydrogenase (Complex I), that is believed not to be involved in catalysis. Complex I functions in the transfer of electrons from NADH to the respiratory chain. The immediate electron acceptor for the enzyme is believed to be ubiquinone. The protein is Probable NADH dehydrogenase [ubiquinone] 1 beta subcomplex subunit 2, mitochondrial of Caenorhabditis briggsae.